A 379-amino-acid polypeptide reads, in one-letter code: Cytochrome b (379 aa).

A run of 4 helical transmembrane segments spans residues 33 to 53 (FGSLLGLCLISQILTGLFLAM), 77 to 98 (WLIRNLHANGASFFFICLYLHI), 113 to 133 (WNIGVVLFLLVMMTAFVGYVL), and 178 to 198 (FFAFHFLFPFVVAGATMLHLL). Residues His-83 and His-97 each contribute to the heme b site. Heme b-binding residues include His-182 and His-196. His-201 is an a ubiquinone binding site. 4 consecutive transmembrane segments (helical) span residues 226 to 246 (YKDLLGFIIMLTALTMLALFY), 288 to 308 (LGGVLALLSSILVLMVVPILH), 320 to 340 (ASQLLFWILVADMLVLTWIGG), and 347 to 367 (YIIIGQVASVLYFSLFLVLNP).

The protein belongs to the cytochrome b family. In terms of assembly, the cytochrome bc1 complex contains 3 respiratory subunits (MT-CYB, CYC1 and UQCRFS1), 2 core proteins (UQCRC1 and UQCRC2) and probably 6 low-molecular weight proteins. Requires heme b as cofactor.

Its subcellular location is the mitochondrion inner membrane. In terms of biological role, component of the ubiquinol-cytochrome c reductase complex (complex III or cytochrome b-c1 complex) that is part of the mitochondrial respiratory chain. The b-c1 complex mediates electron transfer from ubiquinol to cytochrome c. Contributes to the generation of a proton gradient across the mitochondrial membrane that is then used for ATP synthesis. The sequence is that of Cytochrome b (mt-cyb) from Anguilla rostrata (American eel).